Consider the following 148-residue polypeptide: Putative nickel-responsive regulator (148 aa).

Positions 88, 99, 101, and 107 each coordinate Ni(2+).

The protein belongs to the transcriptional regulatory CopG/NikR family. In terms of assembly, homotetramer. Ni(2+) is required as a cofactor.

Its function is as follows. Transcriptional regulator. The protein is Putative nickel-responsive regulator of Helicobacter pylori (strain J99 / ATCC 700824) (Campylobacter pylori J99).